The primary structure comprises 525 residues: Cytochrome P450 703A2 (525 aa).

The chain crosses the membrane as a helical span at residues 3–23 (PFLLSIILCSWIFVVVSWKKL). A heme-binding site is contributed by cysteine 455.

Belongs to the cytochrome P450 family. The cofactor is heme.

It localises to the membrane. The enzyme catalyses dodecanoate + reduced [NADPH--hemoprotein reductase] + O2 = 7-hydroxydodecanoate + oxidized [NADPH--hemoprotein reductase] + H2O + H(+). In terms of biological role, involved in pollen exine and anther epicuticular layer development. Catalyzes the in-chain hydroxylation of lauric acid (C12:0) preferentially on position 7, generating 7-hydroxylated lauric acid. Does not possess activity with other fatty acids (C14:0, C16:0, C16:1, and C18:0). Participates in a conserved pathway of in-chain hydroxylation of lauric acid required for anther cuticle and pollen exine formation. Directly regulated by TDR, a known regulator of tapetum programmed cell death (PCD) and pollen exine formation. The polypeptide is Cytochrome P450 703A2 (Oryza sativa subsp. japonica (Rice)).